We begin with the raw amino-acid sequence, 240 residues long: Phosphoribosylaminoimidazole-succinocarboxamide synthase (240 aa).

It belongs to the SAICAR synthetase family.

It carries out the reaction 5-amino-1-(5-phospho-D-ribosyl)imidazole-4-carboxylate + L-aspartate + ATP = (2S)-2-[5-amino-1-(5-phospho-beta-D-ribosyl)imidazole-4-carboxamido]succinate + ADP + phosphate + 2 H(+). The protein operates within purine metabolism; IMP biosynthesis via de novo pathway; 5-amino-1-(5-phospho-D-ribosyl)imidazole-4-carboxamide from 5-amino-1-(5-phospho-D-ribosyl)imidazole-4-carboxylate: step 1/2. This Pyrobaculum calidifontis (strain DSM 21063 / JCM 11548 / VA1) protein is Phosphoribosylaminoimidazole-succinocarboxamide synthase.